A 304-amino-acid polypeptide reads, in one-letter code: MERLQISLPGLEMKNPVMPASGCFGFGKEYGQFFDLNQLGAIAIKATTKEARFGNETPRVAETKAGMLNAIGLQNPGLQGVIEQELPRFDDYDVPILANIAGSTMDDYIEVAAELSQQRNVSAIELNISCPNVKQGGIAFGTVPEIAAELTKEVKAVSAVPVYVKLSPNVADIVAIAKAIEKAGADGLAMINTLLGMRIDAKTRRPVLANQYGGLSGAAIKPVALRMIHQVSQQVDIPIIGMGGIQTAEDVIEFLLAGASCIAVGTANFTDPYTCPNIIRDLPHWLDRLEVQSITDLIGGSWNE.

FMN-binding positions include S21 and K45–A46. Substrate-binding positions include K45 and N69–L73. Positions 99 and 127 each coordinate FMN. N127 is a substrate binding site. C130 acts as the Nucleophile in catalysis. Residues K165 and I191 each coordinate FMN. A substrate-binding site is contributed by N192–T193. Residues G217, G243–G244, and G265–T266 contribute to the FMN site.

Belongs to the dihydroorotate dehydrogenase family. Type 1 subfamily. In terms of assembly, heterotetramer of 2 PyrK and 2 PyrD type B subunits. It depends on FMN as a cofactor.

Its subcellular location is the cytoplasm. The catalysed reaction is (S)-dihydroorotate + NAD(+) = orotate + NADH + H(+). The protein operates within pyrimidine metabolism; UMP biosynthesis via de novo pathway; orotate from (S)-dihydroorotate (NAD(+) route): step 1/1. Functionally, catalyzes the conversion of dihydroorotate to orotate with NAD(+) as electron acceptor. The sequence is that of Dihydroorotate dehydrogenase B (NAD(+)), catalytic subunit (pyrD) from Shouchella clausii (strain KSM-K16) (Alkalihalobacillus clausii).